Consider the following 617-residue polypeptide: Threonine--tRNA ligase (617 aa).

Positions 209–502 are catalytic; sequence DHRRLGKDLD…MTENYAGDFP (294 aa). The Zn(2+) site is built by Cys302, His353, and His479.

The protein belongs to the class-II aminoacyl-tRNA synthetase family. As to quaternary structure, homodimer. Zn(2+) serves as cofactor.

It is found in the cytoplasm. The enzyme catalyses tRNA(Thr) + L-threonine + ATP = L-threonyl-tRNA(Thr) + AMP + diphosphate + H(+). Functionally, catalyzes the attachment of threonine to tRNA(Thr) in a two-step reaction: L-threonine is first activated by ATP to form Thr-AMP and then transferred to the acceptor end of tRNA(Thr). Also edits incorrectly charged L-seryl-tRNA(Thr). In Synechococcus sp. (strain CC9311), this protein is Threonine--tRNA ligase.